Here is a 247-residue protein sequence, read N- to C-terminus: Type II restriction enzyme SmaI (247 aa).

It depends on Mg(2+) as a cofactor. The cofactor is K(+).

The enzyme catalyses Endonucleolytic cleavage of DNA to give specific double-stranded fragments with terminal 5'-phosphates.. A P subtype restriction enzyme that recognizes the double-stranded sequence 5'-CCCGGG-3' and cleaves after C-3. This chain is Type II restriction enzyme SmaI (smaIR), found in Serratia marcescens.